The sequence spans 563 residues: BOS complex subunit NCLN (563 aa).

The first 42 residues, 1 to 42, serve as a signal peptide directing secretion; it reads MLEEAGEVLENVLKASCLPLGFIVFLPAVLLLVAPPLPAADA. The Lumenal portion of the chain corresponds to 43 to 522; it reads AHEFTVYRMQ…VMNAYRVKPA (480 aa). 2 N-linked (GlcNAc...) asparagine glycosylation sites follow: asparagine 241 and asparagine 428. Residues 523–543 form a helical membrane-spanning segment; it reads IFDLLLALCIGAYLGMAYTAV. At 544-563 the chain is on the cytoplasmic side; it reads QHFHVLYKTVQRLLLKAKAQ.

Belongs to the nicastrin family. As to quaternary structure, component of the back of Sec61 (BOS) complex, composed of NCLN/Nicalin, NOMO1 and TMEM147. The BOS complex is part of the multi-pass translocon (MPT) complex, composed of three subcomplexes, the GEL complex (composed of RAB5IF/OPTI and TMCO1), the BOS complex (composed of NCLN/Nicalin, NOMO1 and TMEM147) and the PAT complex (composed of WDR83OS/Asterix and CCDC47). The MPT complex associates with the SEC61 complex.

The protein localises to the endoplasmic reticulum membrane. Component of the multi-pass translocon (MPT) complex that mediates insertion of multi-pass membrane proteins into the lipid bilayer of membranes. The MPT complex takes over after the SEC61 complex: following membrane insertion of the first few transmembrane segments of proteins by the SEC61 complex, the MPT complex occludes the lateral gate of the SEC61 complex to promote insertion of subsequent transmembrane regions. May antagonize Nodal signaling and subsequent organization of axial structures during mesodermal patterning, via its interaction with NOMO. This is BOS complex subunit NCLN (Ncln) from Mus musculus (Mouse).